The sequence spans 230 residues: Large ribosomal subunit protein uL1 (230 aa).

It belongs to the universal ribosomal protein uL1 family. In terms of assembly, part of the 50S ribosomal subunit.

Its function is as follows. Binds directly to 23S rRNA. The L1 stalk is quite mobile in the ribosome, and is involved in E site tRNA release. Functionally, protein L1 is also a translational repressor protein, it controls the translation of the L11 operon by binding to its mRNA. The polypeptide is Large ribosomal subunit protein uL1 (Lactobacillus gasseri (strain ATCC 33323 / DSM 20243 / BCRC 14619 / CIP 102991 / JCM 1131 / KCTC 3163 / NCIMB 11718 / NCTC 13722 / AM63)).